Reading from the N-terminus, the 305-residue chain is Serine/threonine-protein phosphatase ppe1 (305 aa).

Positions 51, 53, 79, and 111 each coordinate Mn(2+). Histidine 112 acts as the Proton donor in catalysis. Positions 161 and 235 each coordinate Mn(2+).

This sequence belongs to the PPP phosphatase family. PP-6 (PP-V) subfamily. Interacts with sts5, ekc1 and mis12. Mn(2+) is required as a cofactor.

The protein localises to the nucleus. The enzyme catalyses O-phospho-L-seryl-[protein] + H2O = L-seryl-[protein] + phosphate. It catalyses the reaction O-phospho-L-threonyl-[protein] + H2O = L-threonyl-[protein] + phosphate. In terms of biological role, has a role in chromosome segregation. May provide a dynamic connection between kinetochore microtubules and kinetochore chromatin. Negatively regulates mis12. This Schizosaccharomyces pombe (strain 972 / ATCC 24843) (Fission yeast) protein is Serine/threonine-protein phosphatase ppe1 (ppe1).